The following is a 212-amino-acid chain: Protein YIPF5 homolog (212 aa).

Residues 1-79 (MNNNNSFNFI…KKIDSHIMDD (79 aa)) lie on the Cytoplasmic side of the membrane. A helical transmembrane segment spans residues 80–100 (TDLGGPILFGLLLGFSLLMSG). Position 101 (Lys-101) is a topological domain, lumenal. The helical transmembrane segment at 102–122 (IQFGYIYGLGLIGCVSMYIVL) threads the bilayer. At 123-128 (NLMSEK) the chain is on the cytoplasmic side. A helical transmembrane segment spans residues 129-149 (GIDIYRVISVLGYCLLPMIFL). At 150 to 163 (SFTSLIININGMVG) the chain is on the lumenal side. Residues 164-186 (YILIGFAIVWSTYSASKMFVKVL) form a helical membrane-spanning segment. Residues 187-191 (SMIDQ) are Cytoplasmic-facing. Residues 192–212 (RILVAYPVGLLYTGFALITAF) form a helical membrane-spanning segment.

The protein belongs to the YIP1 family.

It is found in the endoplasmic reticulum membrane. It localises to the golgi apparatus. Its subcellular location is the cis-Golgi network membrane. Its function is as follows. Plays a role in transport between endoplasmic reticulum and Golgi. The chain is Protein YIPF5 homolog (yipf5) from Dictyostelium discoideum (Social amoeba).